A 24-amino-acid polypeptide reads, in one-letter code: 60 kDa chaperonin, mitochondrial (24 aa).

The protein belongs to the chaperonin (HSP60) family. As to quaternary structure, forms a single seven-member ring complex, in tight association with the p63 protein. In terms of tissue distribution, testis.

The protein localises to the mitochondrion. In terms of biological role, implicated in mitochondrial protein import and macromolecular assembly. May facilitate the correct folding of imported proteins. May also prevent misfolding and promote the refolding and proper assembly of unfolded polypeptides generated under stress conditions in the mitochondrial matrix. The polypeptide is 60 kDa chaperonin, mitochondrial (Heliothis virescens (Tobacco budworm moth)).